Consider the following 326-residue polypeptide: GTP 3',8-cyclase (326 aa).

In terms of domain architecture, Radical SAM core spans 7–232; that stretch reads GFGRSFPYLR…PRAADAGPAR (226 aa). Position 16 (R16) interacts with GTP. [4Fe-4S] cluster-binding residues include C23 and C27. Y29 lines the S-adenosyl-L-methionine pocket. Residue C30 participates in [4Fe-4S] cluster binding. R65 is a binding site for GTP. G69 serves as a coordination point for S-adenosyl-L-methionine. T96 lines the GTP pocket. S120 contacts S-adenosyl-L-methionine. K157 contributes to the GTP binding site. Position 191 (M191) interacts with S-adenosyl-L-methionine. 2 residues coordinate [4Fe-4S] cluster: C254 and C257. 259-261 contributes to the GTP binding site; the sequence is RLR. C271 contributes to the [4Fe-4S] cluster binding site.

This sequence belongs to the radical SAM superfamily. MoaA family. In terms of assembly, monomer and homodimer. [4Fe-4S] cluster is required as a cofactor.

The enzyme catalyses GTP + AH2 + S-adenosyl-L-methionine = (8S)-3',8-cyclo-7,8-dihydroguanosine 5'-triphosphate + 5'-deoxyadenosine + L-methionine + A + H(+). It functions in the pathway cofactor biosynthesis; molybdopterin biosynthesis. Its function is as follows. Catalyzes the cyclization of GTP to (8S)-3',8-cyclo-7,8-dihydroguanosine 5'-triphosphate. The sequence is that of GTP 3',8-cyclase from Stenotrophomonas maltophilia (strain K279a).